The primary structure comprises 244 residues: 5'-deoxynucleotidase (244 aa).

The catalysed reaction is a 2'-deoxyribonucleoside 5'-phosphate + H2O = a 2'-deoxyribonucleoside + phosphate. Its function is as follows. Following host DNA degradation, is responsible for the degradation of 5'-dNMP's to deoxynucleosides that can be further excreted. Active on deoxynucleoside 5'-monophosphates but not active as a phosphatase on ribonucleotides, deoxynucleoside 5'-triphosphates, deoxynucleoside 3'-monophosphates, or deoxyoligonucleotides. The polypeptide is 5'-deoxynucleotidase (dmp) (Escherichia coli (Enterobacteria phage T5)).